The following is a 130-amino-acid chain: Transcription antitermination protein NusB (130 aa).

The protein belongs to the NusB family.

Its function is as follows. Involved in transcription antitermination. Required for transcription of ribosomal RNA (rRNA) genes. Binds specifically to the boxA antiterminator sequence of the ribosomal RNA (rrn) operons. The protein is Transcription antitermination protein NusB of Bacillus cereus (strain ATCC 10987 / NRS 248).